The chain runs to 76 residues: Putative defensin-like protein 62 (76 aa).

The first 26 residues, 1–26, serve as a signal peptide directing secretion; the sequence is MDVTKTYVTIFVVAILTISVLIQIQQ. 4 cysteine pairs are disulfide-bonded: Cys30/Cys71, Cys34/Cys57, Cys43/Cys69, and Cys47/Cys70.

It belongs to the DEFL family.

It localises to the secreted. The sequence is that of Putative defensin-like protein 62 from Arabidopsis thaliana (Mouse-ear cress).